Consider the following 620-residue polypeptide: Palmitoyltransferase ZDHHC17 (620 aa).

Residues 1 to 292 (MADALVGYEK…LKMDKEFRQK (292 aa)) are Cytoplasmic-facing. ANK repeat units follow at residues 77-106 (ENVT…IVDQ), 111-140 (LNST…DPSL), 144-173 (EGCS…DVDM), 177-207 (NGMT…SVNL), 212-241 (HKNT…NVDA), and 245-274 (KGET…AKGY). The next 2 membrane-spanning stretches (helical) occupy residues 293 to 313 (VMLG…DLDI) and 314 to 334 (DSWL…QFLS). Topologically, residues 335 to 345 (KSFFDHSMHSA) are cytoplasmic. The helical transmembrane segment at 346-366 (LPLGIYLATKFWMYITWFYWF) threads the bilayer. At 367–369 (WND) the chain is on the lumenal side. Residues 370–390 (LPFVTIHLPFLLNSLALFYNF) form a helical membrane-spanning segment. The Cytoplasmic portion of the chain corresponds to 391–469 (GKSWKSDPGI…NCVGSGNHRY (79 aa)). Positions 425-475 (IFCSTCLIRKPIRSKHCAVCNRCIAKFDHHCPWVGNCVGSGNHRYFMGYLF) constitute a DHHC domain. Cys455 (S-palmitoyl cysteine intermediate) is an active-site residue. Residues 470–490 (FMGYLFFLLCMICWMMYGCIC) form a helical membrane-spanning segment. Topologically, residues 491 to 504 (YWRIHCATSYTKDG) are lumenal. Residues 505 to 524 (FWIYITQIATCSPWMFWMFL) traverse the membrane as a helical segment. Topologically, residues 525–620 (NSVFHFMWVA…QTSGSGYQLV (96 aa)) are cytoplasmic.

Belongs to the DHHC palmitoyltransferase family. AKR/ZDHHC17 subfamily. Post-translationally, autopalmitoylated.

It localises to the golgi apparatus membrane. It is found in the cytoplasmic vesicle membrane. Its subcellular location is the presynaptic cell membrane. The catalysed reaction is L-cysteinyl-[protein] + hexadecanoyl-CoA = S-hexadecanoyl-L-cysteinyl-[protein] + CoA. The enzyme catalyses L-cysteinyl-[protein] + tetradecanoyl-CoA = S-tetradecanoyl-L-cysteinyl-[protein] + CoA. It catalyses the reaction L-cysteinyl-[protein] + octadecanoyl-CoA = S-octadecanoyl-L-cysteinyl-[protein] + CoA. Palmitoyltransferase that catalyzes the addition of palmitate onto various protein substrates and is involved in a variety of cellular processes. Has no stringent fatty acid selectivity and in addition to palmitate can also transfer onto target proteins myristate from tetradecanoyl-CoA and stearate from octadecanoyl-CoA. Plays a role in axonogenesis. This chain is Palmitoyltransferase ZDHHC17, found in Danio rerio (Zebrafish).